We begin with the raw amino-acid sequence, 962 residues long: Vacuolar membrane protease (962 aa).

The Cytoplasmic segment spans residues 1–15 (MVSSRRGFNPIAFTP). Residues 16-36 (WPVTILSSLVYLALIIPIIVV) traverse the membrane as a helical segment. Over 37–390 (HHLVPPAPKE…FQLNTLFGHS (354 aa)) the chain is Vacuolar. Residues N110 and N113 are each glycosylated (N-linked (GlcNAc...) asparagine). 2 residues coordinate Zn(2+): H169 and D181. E215 functions as the Proton acceptor in the catalytic mechanism. Zn(2+) is bound by residues E216, E241, and H314. A helical membrane pass occupies residues 391-411 (VALLVVAPLLLIITSVALFAV). Residues 412–440 (DKMYMFSMYTYISESGGQVSLYGLRGMFR) lie on the Cytoplasmic side of the membrane. A helical membrane pass occupies residues 441–461 (FPLILGISTALTIALAFLIMK). The Vacuolar portion of the chain corresponds to 462-472 (VNPFIIYSSPY). A helical transmembrane segment spans residues 473–493 (AVWSMMLSTCMFFAWFISCVA). At 494–503 (DFARPSALHR) the chain is on the cytoplasmic side. Residues 504–524 (AYSFSWMFGIMWVFLVIATVY) traverse the membrane as a helical segment. Residues 525-534 (QKQHGIASSY) lie on the Vacuolar side of the membrane. A helical transmembrane segment spans residues 535–555 (FIVFYFAGVAVATWISYLELF). Residues 556–667 (GLPKTQDYAR…WSIYLMSSAW (112 aa)) lie on the Cytoplasmic side of the membrane. Positions 568-617 (GRLSDRTPSSDSHFLAPSADELPSSSSAAGRDFNPEDVEDEEPTESTSLL) are disordered. A compositionally biased stretch (acidic residues) spans 602–611 (PEDVEDEEPT). The chain crosses the membrane as a helical span at residues 668–688 (ILQFLLVAPIVIILLGQLGLF). Over 689 to 704 (LTSATYQIGADGGSQL) the chain is Vacuolar. Residues 705 to 725 (VIYIGIAVLSVLILLPLFPFI) form a helical membrane-spanning segment. At 726-731 (HRFTYH) the chain is on the cytoplasmic side. The helical transmembrane segment at 732 to 752 (IPTFLLFILIGTLVYNLTAFP) threads the bilayer. Topologically, residues 753 to 962 (FSHSNRLKLA…LVEGSYSFKL (210 aa)) are vacuolar. N-linked (GlcNAc...) asparagine glycosylation is present at N834.

This sequence belongs to the peptidase M28 family. Requires Zn(2+) as cofactor.

It localises to the vacuole membrane. May be involved in vacuolar sorting and osmoregulation. In Arthroderma benhamiae (strain ATCC MYA-4681 / CBS 112371) (Trichophyton mentagrophytes), this protein is Vacuolar membrane protease.